The following is a 210-amino-acid chain: 3-hexulose-6-phosphate synthase (210 aa).

This sequence belongs to the HPS/KGPDC family. HPS subfamily.

It carries out the reaction D-ribulose 5-phosphate + formaldehyde = D-arabino-hex-3-ulose 6-phosphate. Its pathway is one-carbon metabolism; formaldehyde assimilation via RuMP pathway; D-fructose 6-phosphate from D-ribulose 5-phosphate and formaldehyde: step 1/2. Catalyzes the condensation of ribulose 5-phosphate with formaldehyde to form 3-hexulose 6-phosphate. The chain is 3-hexulose-6-phosphate synthase from Staphylococcus aureus (strain bovine RF122 / ET3-1).